A 164-amino-acid polypeptide reads, in one-letter code: NADH-quinone oxidoreductase subunit I (164 aa).

4Fe-4S ferredoxin-type domains follow at residues 55–85 (LRRYPNGEERCIACKLCEAICPAQAITIDAE) and 95–124 (TRYDIDMTKCIYCGFCQEACPVDAIVEGPN). 8 residues coordinate [4Fe-4S] cluster: cysteine 65, cysteine 68, cysteine 71, cysteine 75, cysteine 104, cysteine 107, cysteine 110, and cysteine 114.

The protein belongs to the complex I 23 kDa subunit family. In terms of assembly, NDH-1 is composed of 14 different subunits. Subunits NuoA, H, J, K, L, M, N constitute the membrane sector of the complex. [4Fe-4S] cluster is required as a cofactor.

It is found in the cell inner membrane. It carries out the reaction a quinone + NADH + 5 H(+)(in) = a quinol + NAD(+) + 4 H(+)(out). Its function is as follows. NDH-1 shuttles electrons from NADH, via FMN and iron-sulfur (Fe-S) centers, to quinones in the respiratory chain. The immediate electron acceptor for the enzyme in this species is believed to be ubiquinone. Couples the redox reaction to proton translocation (for every two electrons transferred, four hydrogen ions are translocated across the cytoplasmic membrane), and thus conserves the redox energy in a proton gradient. The polypeptide is NADH-quinone oxidoreductase subunit I (Ruegeria pomeroyi (strain ATCC 700808 / DSM 15171 / DSS-3) (Silicibacter pomeroyi)).